The sequence spans 615 residues: tRNA uridine 5-carboxymethylaminomethyl modification enzyme MnmG (615 aa).

11–16 serves as a coordination point for FAD; sequence GLGHAG. 278–292 is an NAD(+) binding site; the sequence is GPRYCPSLEDKVVRF.

The protein belongs to the MnmG family. Homodimer. Heterotetramer of two MnmE and two MnmG subunits. Requires FAD as cofactor.

It localises to the cytoplasm. Its function is as follows. NAD-binding protein involved in the addition of a carboxymethylaminomethyl (cmnm) group at the wobble position (U34) of certain tRNAs, forming tRNA-cmnm(5)s(2)U34. The sequence is that of tRNA uridine 5-carboxymethylaminomethyl modification enzyme MnmG from Myxococcus xanthus (strain DK1622).